The chain runs to 227 residues: tRNA (guanine-N(1)-)-methyltransferase (227 aa).

Residues Gly-110 and 129–134 (IGDYVL) contribute to the S-adenosyl-L-methionine site.

Belongs to the RNA methyltransferase TrmD family. In terms of assembly, homodimer.

The protein resides in the cytoplasm. The catalysed reaction is guanosine(37) in tRNA + S-adenosyl-L-methionine = N(1)-methylguanosine(37) in tRNA + S-adenosyl-L-homocysteine + H(+). Functionally, specifically methylates guanosine-37 in various tRNAs. In Mycoplasmopsis agalactiae (strain NCTC 10123 / CIP 59.7 / PG2) (Mycoplasma agalactiae), this protein is tRNA (guanine-N(1)-)-methyltransferase.